Reading from the N-terminus, the 758-residue chain is Probable ubiquitin carboxyl-terminal hydrolase creB (758 aa).

Residues 1-27 (MGSFLRSFRRDVGSSTPSVGATPAKKE) form a disordered region. Residues 57–468 (FGMENYGNTC…CAYVLFYQET (412 aa)) form the USP domain. The Nucleophile role is filled by C66. Disordered regions lie at residues 116 to 148 (AEAQAEKQRLANAQRPGAPPAQPPKPEDKDSSE) and 243 to 268 (QPIPSLPPADTTDSSRQSISSGSKTP). Residues 253 to 268 (TTDSSRQSISSGSKTP) show a composition bias toward polar residues. H419 (proton acceptor) is an active-site residue. Residues 514 to 744 (IPVQDEPQRH…KGDRAGHGKW (231 aa)) form a disordered region. The span at 554–563 (ATPPPVPPIP) shows a compositional bias: pro residues. Positions 573-631 (KKSDIQSKKERAKEEKERKAAEKEMEKQRRKEQEARVKENQRREEAELKAALEASKASK) form a coiled coil. Basic and acidic residues-rich tracts occupy residues 573 to 650 (KKSD…DPKR) and 729 to 740 (DALKSPKGDRAG).

This sequence belongs to the peptidase C19 family. Interacts with creA, creC and qutD.

The catalysed reaction is Thiol-dependent hydrolysis of ester, thioester, amide, peptide and isopeptide bonds formed by the C-terminal Gly of ubiquitin (a 76-residue protein attached to proteins as an intracellular targeting signal).. Ubiquitin thioesterase component of the regulatory network controlling carbon source utilization through ubiquitination and deubiquitination involving creA, creB, creC, creD and acrB. Deubiquitinates the creA catabolic repressor and the quinate permease qutD. Also plays a role in response to carbon starvation and the control of extracellular proteases activity. The polypeptide is Probable ubiquitin carboxyl-terminal hydrolase creB (creB) (Aspergillus niger (strain ATCC MYA-4892 / CBS 513.88 / FGSC A1513)).